The following is a 217-amino-acid chain: LexA repressor (217 aa).

Residues 28-48 (RAEIAAEFGFSSPNAAEEHLR) constitute a DNA-binding region (H-T-H motif). Active-site for autocatalytic cleavage activity residues include Ser136 and Lys173.

The protein belongs to the peptidase S24 family. In terms of assembly, homodimer.

It catalyses the reaction Hydrolysis of Ala-|-Gly bond in repressor LexA.. In terms of biological role, represses a number of genes involved in the response to DNA damage (SOS response), including recA and lexA. In the presence of single-stranded DNA, RecA interacts with LexA causing an autocatalytic cleavage which disrupts the DNA-binding part of LexA, leading to derepression of the SOS regulon and eventually DNA repair. The sequence is that of LexA repressor from Cupriavidus necator (strain ATCC 17699 / DSM 428 / KCTC 22496 / NCIMB 10442 / H16 / Stanier 337) (Ralstonia eutropha).